The following is a 233-amino-acid chain: Superoxide dismutase [Mn] 3.3, mitochondrial (233 aa).

The transit peptide at 1-29 (MALRTLASKNALSFALGGAARPSAESARG) directs the protein to the mitochondrion. Residues histidine 57, histidine 105, aspartate 194, and histidine 198 each coordinate Mn(2+).

The protein belongs to the iron/manganese superoxide dismutase family. As to quaternary structure, homotetramer. It depends on Mn(2+) as a cofactor. Predominantly expressed in the embryo late in embryogenesis.

It localises to the mitochondrion matrix. It catalyses the reaction 2 superoxide + 2 H(+) = H2O2 + O2. Functionally, destroys superoxide anion radicals which are normally produced within the cells and which are toxic to biological systems. In Zea mays (Maize), this protein is Superoxide dismutase [Mn] 3.3, mitochondrial (SODA.2).